Here is a 570-residue protein sequence, read N- to C-terminus: Glycine--tRNA ligase (570 aa).

Substrate-binding residues include Arg99 and Glu165. Residues 197 to 199, 207 to 212, 324 to 325, and 443 to 446 contribute to the ATP site; these read RNE, LRLREF, EC, and GIDR. 212 to 216 contacts substrate; sequence FTQAE. 439-443 is a substrate binding site; sequence EPSFG.

It belongs to the class-II aminoacyl-tRNA synthetase family.

The protein localises to the cytoplasm. It catalyses the reaction tRNA(Gly) + glycine + ATP = glycyl-tRNA(Gly) + AMP + diphosphate. Catalyzes the attachment of glycine to tRNA(Gly). The sequence is that of Glycine--tRNA ligase from Thermococcus kodakarensis (strain ATCC BAA-918 / JCM 12380 / KOD1) (Pyrococcus kodakaraensis (strain KOD1)).